The following is a 491-amino-acid chain: NADH-quinone oxidoreductase subunit N 1 (491 aa).

The next 14 helical transmembrane spans lie at I9–L29, P38–W58, F76–F96, S104–G124, L126–F146, F161–A181, V211–I231, A246–A266, F276–I296, L304–G324, S329–V349, V375–F395, A410–I432, and V461–S481.

This sequence belongs to the complex I subunit 2 family. In terms of assembly, NDH-1 is composed of 14 different subunits. Subunits NuoA, H, J, K, L, M, N constitute the membrane sector of the complex.

The protein resides in the cell membrane. The enzyme catalyses a quinone + NADH + 5 H(+)(in) = a quinol + NAD(+) + 4 H(+)(out). NDH-1 shuttles electrons from NADH, via FMN and iron-sulfur (Fe-S) centers, to quinones in the respiratory chain. The immediate electron acceptor for the enzyme in this species is believed to be a menaquinone. Couples the redox reaction to proton translocation (for every two electrons transferred, four hydrogen ions are translocated across the cytoplasmic membrane), and thus conserves the redox energy in a proton gradient. The sequence is that of NADH-quinone oxidoreductase subunit N 1 from Symbiobacterium thermophilum (strain DSM 24528 / JCM 14929 / IAM 14863 / T).